We begin with the raw amino-acid sequence, 345 residues long: Phosphoribosylformylglycinamidine cyclo-ligase (345 aa).

The protein belongs to the AIR synthase family.

It localises to the cytoplasm. It catalyses the reaction 2-formamido-N(1)-(5-O-phospho-beta-D-ribosyl)acetamidine + ATP = 5-amino-1-(5-phospho-beta-D-ribosyl)imidazole + ADP + phosphate + H(+). Its pathway is purine metabolism; IMP biosynthesis via de novo pathway; 5-amino-1-(5-phospho-D-ribosyl)imidazole from N(2)-formyl-N(1)-(5-phospho-D-ribosyl)glycinamide: step 2/2. The protein is Phosphoribosylformylglycinamidine cyclo-ligase of Escherichia coli O6:K15:H31 (strain 536 / UPEC).